A 432-amino-acid chain; its full sequence is Glutamate-1-semialdehyde 2,1-aminomutase (432 aa).

At K272 the chain carries N6-(pyridoxal phosphate)lysine.

This sequence belongs to the class-III pyridoxal-phosphate-dependent aminotransferase family. HemL subfamily. Homodimer. The cofactor is pyridoxal 5'-phosphate.

The protein resides in the cytoplasm. It carries out the reaction (S)-4-amino-5-oxopentanoate = 5-aminolevulinate. It participates in porphyrin-containing compound metabolism; protoporphyrin-IX biosynthesis; 5-aminolevulinate from L-glutamyl-tRNA(Glu): step 2/2. The protein operates within porphyrin-containing compound metabolism; chlorophyll biosynthesis. The sequence is that of Glutamate-1-semialdehyde 2,1-aminomutase from Trichormus variabilis (strain ATCC 29413 / PCC 7937) (Anabaena variabilis).